Consider the following 407-residue polypeptide: Indoleamine 2,3-dioxygenase 1 (407 aa).

Position 350 (H350) interacts with heme b. The tract at residues 362 to 388 is disordered; sequence SKQKPMGGHKSEEPSNTENRGTGGTDV.

Belongs to the indoleamine 2,3-dioxygenase family. Monomer. Requires heme b as cofactor.

It is found in the cytoplasm. It localises to the cytosol. The enzyme catalyses D-tryptophan + O2 = N-formyl-D-kynurenine. It catalyses the reaction L-tryptophan + O2 = N-formyl-L-kynurenine. Its activity is regulated as follows. Activity is inhibited by and MTH-trp (methylthiohydantoin-DL-tryptophan), modestly inhibited by L-1MT (1-methyl-L-tryptophan) but not D-1MT (1-methyl-D-tryptophan). Catalyzes the first and rate limiting step of the catabolism of the essential amino acid tryptophan along the kynurenine pathway. Involved in the peripheral immune tolerance, contributing to maintain homeostasis by preventing autoimmunity or immunopathology that would result from uncontrolled and overreacting immune responses. Tryptophan shortage inhibits T lymphocytes division and accumulation of tryptophan catabolites induces T-cell apoptosis and differentiation of regulatory T-cells. Acts as a suppressor of anti-tumor immunity. Limits the growth of intracellular pathogens by depriving tryptophan. Protects the fetus from maternal immune rejection. The polypeptide is Indoleamine 2,3-dioxygenase 1 (Rattus norvegicus (Rat)).